A 548-amino-acid chain; its full sequence is T-complex protein 1 subunit theta (548 aa).

The tract at residues 528–548 (ATGGPKPRGPKQQDEDDDGMA) is disordered.

It belongs to the TCP-1 chaperonin family. In terms of assembly, heterooligomeric complex.

It is found in the cytoplasm. In terms of biological role, molecular chaperone; assists the folding of proteins upon ATP hydrolysis. Known to play a role, in vitro, in the folding of actin and tubulin. Required for correct subcellular localization of pgl-1. This Caenorhabditis briggsae protein is T-complex protein 1 subunit theta.